The primary structure comprises 332 residues: tRNA dimethylallyltransferase (332 aa).

14–21 provides a ligand contact to ATP; that stretch reads GPTASGKT. Residue 16 to 21 coordinates substrate; the sequence is TASGKT. An interaction with substrate tRNA region spans residues 39–42; the sequence is DSMQ. Residues 313–332 form a disordered region; sequence KRSSKHDCKPQHPRSSTREL. The segment covering 317-332 has biased composition (basic and acidic residues); sequence KHDCKPQHPRSSTREL.

This sequence belongs to the IPP transferase family. In terms of assembly, monomer. Mg(2+) is required as a cofactor.

It catalyses the reaction adenosine(37) in tRNA + dimethylallyl diphosphate = N(6)-dimethylallyladenosine(37) in tRNA + diphosphate. Functionally, catalyzes the transfer of a dimethylallyl group onto the adenine at position 37 in tRNAs that read codons beginning with uridine, leading to the formation of N6-(dimethylallyl)adenosine (i(6)A). The polypeptide is tRNA dimethylallyltransferase (Staphylococcus haemolyticus (strain JCSC1435)).